The primary structure comprises 192 residues: Large ribosomal subunit protein uL24c (192 aa).

Residues 1–47 constitute a chloroplast transit peptide; sequence MAAMAALQSSFTSLSLSSNSFLGQRLFPSPTTLQVKTEGHSPCLIVM.

In terms of assembly, component of the chloroplast large ribosomal subunit (LSU). Mature 70S chloroplast ribosomes of higher plants consist of a small (30S) and a large (50S) subunit. The 30S small subunit contains 1 molecule of ribosomal RNA (16S rRNA) and 24 different proteins. The 50S large subunit contains 3 rRNA molecules (23S, 5S and 4.5S rRNA) and 33 different proteins.

It is found in the plastid. The protein resides in the chloroplast. In terms of biological role, component of the chloroplast ribosome (chloro-ribosome), a dedicated translation machinery responsible for the synthesis of chloroplast genome-encoded proteins, including proteins of the transcription and translation machinery and components of the photosynthetic apparatus. The protein is Large ribosomal subunit protein uL24c (RPL24) of Spinacia oleracea (Spinach).